Here is a 159-residue protein sequence, read N- to C-terminus: Phosphopantetheine adenylyltransferase (159 aa).

Thr-10 is a binding site for substrate. Residues 10-11 (TF) and His-18 contribute to the ATP site. Substrate-binding residues include Lys-42, Met-74, and Arg-88. ATP is bound by residues 89 to 91 (GLR), Glu-99, and 124 to 130 (WSFISSS).

It belongs to the bacterial CoaD family. Homohexamer. The cofactor is Mg(2+).

The protein localises to the cytoplasm. It catalyses the reaction (R)-4'-phosphopantetheine + ATP + H(+) = 3'-dephospho-CoA + diphosphate. The protein operates within cofactor biosynthesis; coenzyme A biosynthesis; CoA from (R)-pantothenate: step 4/5. In terms of biological role, reversibly transfers an adenylyl group from ATP to 4'-phosphopantetheine, yielding dephospho-CoA (dPCoA) and pyrophosphate. The protein is Phosphopantetheine adenylyltransferase of Citrobacter koseri (strain ATCC BAA-895 / CDC 4225-83 / SGSC4696).